The following is a 274-amino-acid chain: MGPELGWGHPRGGDVCSSDSFNEDNTAFAKQVRSERPFFSSNPELDNLMIQAIQVLRFHLLELEKGKMPIDLVIEDRDGGCREDFEDYPASCPSLPDQNNIWIRDHEDSGSVHLGTPGPSSGGLASQSGDNSSDQGVGLDTSVASPSSGGEDEDLDQEPRRNKKRGIFPKVATNIMRAWLFQHLSHPYPSEEQKKQLAQDTGLTILQVNNWFINARRRIVQPMIDQSNRTGQGAAFSPEGQPIGGYTETEPHVAFRAPASVGMSLNSEGEWHYL.

One can recognise an MEIS N-terminal domain in the interval 12–65 (GGDVCSSDSFNEDNTAFAKQVRSERPFFSSNPELDNLMIQAIQVLRFHLLELEK). 2 disordered regions span residues 108–167 (DSGS…KRGI) and 228–248 (NRTGQGAAFSPEGQPIGGYTE). The segment covering 123–135 (GLASQSGDNSSDQ) has biased composition (polar residues). The segment at residues 161 to 223 (RNKKRGIFPK…NARRRIVQPM (63 aa)) is a DNA-binding region (homeobox).

Belongs to the TALE/MEIS homeobox family.

The protein localises to the nucleus. The protein is Putative homeobox protein Meis3-like 1 (MEIS3P1) of Homo sapiens (Human).